A 175-amino-acid chain; its full sequence is UPF0398 protein SGO_0588 (175 aa).

Belongs to the UPF0398 family.

This chain is UPF0398 protein SGO_0588, found in Streptococcus gordonii (strain Challis / ATCC 35105 / BCRC 15272 / CH1 / DL1 / V288).